The chain runs to 105 residues: ATP-dependent Clp protease adapter protein ClpS (105 aa).

It belongs to the ClpS family. Binds to the N-terminal domain of the chaperone ClpA.

Involved in the modulation of the specificity of the ClpAP-mediated ATP-dependent protein degradation. This is ATP-dependent Clp protease adapter protein ClpS from Prochlorococcus marinus (strain MIT 9515).